Consider the following 157-residue polypeptide: Large ribosomal subunit protein uL10 (157 aa).

It belongs to the universal ribosomal protein uL10 family. As to quaternary structure, part of the ribosomal stalk of the 50S ribosomal subunit. The N-terminus interacts with L11 and the large rRNA to form the base of the stalk. The C-terminus forms an elongated spine to which L12 dimers bind in a sequential fashion forming a multimeric L10(L12)X complex.

Its function is as follows. Forms part of the ribosomal stalk, playing a central role in the interaction of the ribosome with GTP-bound translation factors. The chain is Large ribosomal subunit protein uL10 from Campylobacter hominis (strain ATCC BAA-381 / DSM 21671 / CCUG 45161 / LMG 19568 / NCTC 13146 / CH001A).